The sequence spans 251 residues: 5'-nucleotidase SurE (251 aa).

Residues Asp8, Asp9, Ser40, and Asn95 each contribute to the a divalent metal cation site.

The protein belongs to the SurE nucleotidase family. Requires a divalent metal cation as cofactor.

It localises to the cytoplasm. The catalysed reaction is a ribonucleoside 5'-phosphate + H2O = a ribonucleoside + phosphate. Functionally, nucleotidase that shows phosphatase activity on nucleoside 5'-monophosphates. The protein is 5'-nucleotidase SurE of Lawsonia intracellularis (strain PHE/MN1-00).